The sequence spans 64 residues: Frontoxin V (64 aa).

5 cysteine pairs are disulfide-bonded: Cys-3–Cys-24, Cys-6–Cys-11, Cys-17–Cys-41, Cys-45–Cys-57, and Cys-58–Cys-63.

As to expression, expressed by the venom gland.

The protein resides in the secreted. Its function is as follows. Produces peripheral paralysis by blocking neuromuscular transmission at the postsynaptic site. Binds to the muscular nicotinic acetylcholine receptor (nAChR). In Micrurus frontalis (Coral snake), this protein is Frontoxin V.